We begin with the raw amino-acid sequence, 760 residues long: MMDQARSAFSNLFGGEPLSYTRFSLARQVDGDNSHVEMKLAVDEEENADNNTKANVTKPKRCSGSICYGTIAVIVFFLIGFMIGYLGYCKGVEPKTECERLAGTESPVREEPGEDFPAARRLYWDDLKRKLSEKLDSTDFTGTIKLLNENSYVPREAGSQKDENLALYVENQFREFKLSKVWRDQHFVKIQVKDSAQNSVIIVDKNGRLVYLVENPGGYVAYSKAATVTGKLVHANFGTKKDFEDLYTPVNGSIVIVRAGKITFAEKVANAESLNAIGVLIYMDQTKFPIVNAELSFFGHAHLGTGDPYTPGFPSFNHTQFPPSRSSGLPNIPVQTISRAAAEKLFGNMEGDCPSDWKTDSTCRMVTSESKNVKLTVSNVLKEIKILNIFGVIKGFVEPDHYVVVGAQRDAWGPGAAKSGVGTALLLKLAQMFSDMVLKDGFQPSRSIIFASWSAGDFGSVGATEWLEGYLSSLHLKAFTYINLDKAVLGTSNFKVSASPLLYTLIEKTMQNVKHPVTGQFLYQDSNWASKVEKLTLDNAAFPFLAYSGIPAVSFCFCEDTDYPYLGTTMDTYKELIERIPELNKVARAAAEVAGQFVIKLTHDVELNLDYERYNSQLLSFVRDLNQYRADIKEMGLSLQWLYSARGDFFRATSRLTTDFGNAEKTDRFVMKKLNDRVMRVEYHFLSPYVSPKESPFRHVFWGSGSHTLPALLENLKLRKQNNGAFNETLFRNQLALATWTIQGAANALSGDVWDIDNEF.

Topologically, residues 1 to 67 (MMDQARSAFS…KPKRCSGSIC (67 aa)) are cytoplasmic. The tract at residues 1–67 (MMDQARSAFS…KPKRCSGSIC (67 aa)) is mediates interaction with SH3BP4. Phosphoserine occurs at positions 10 and 19. Position 20 is a phosphotyrosine (tyrosine 20). An Endocytosis signal motif is present at residues 20 to 23 (YTRF). Threonine 21 carries the phosphothreonine modification. Serine 24 bears the Phosphoserine mark. Positions 58–61 (KPKR) match the Stop-transfer sequence motif. 2 S-palmitoyl cysteine lipidation sites follow: cysteine 62 and cysteine 67. The helical; Signal-anchor for type II membrane protein transmembrane segment at 68-88 (YGTIAVIVFFLIGFMIGYLGY) threads the bilayer. The Extracellular portion of the chain corresponds to 89–760 (CKGVEPKTEC…GDVWDIDNEF (672 aa)). Threonine 104 carries an O-linked (GalNAc...) threonine glycan. The region spanning 223 to 313 (SKAATVTGKL…GTGDPYTPGF (91 aa)) is the PA domain. 2 N-linked (GlcNAc...) asparagine glycosylation sites follow: asparagine 251 and asparagine 317. The interval 569 to 760 (TMDTYKELIE…GDVWDIDNEF (192 aa)) is ligand-binding. The Cell attachment site; required for binding to transferrin signature appears at 646-648 (RGD). Residue asparagine 727 is glycosylated (N-linked (GlcNAc...) asparagine).

It belongs to the peptidase M28 family. M28B subfamily. In terms of assembly, homodimer; disulfide-linked. Binds one transferrin or HFE molecule per subunit. Binds the HLA class II histocompatibility antigen, DR1. Interacts with SH3BP3. Interacts with STEAP3; facilitates TFRC endocytosis in erythroid precursor cells. Interacts with GRM2. (Microbial infection) Interacts with Guanarito, Junin and Machupo arenavirus glycoprotein complex. As to quaternary structure, (Microbial infection) Interacts with rabies virus protein G. In terms of assembly, (Microbial infection) Interacts with SARS-CoV-2 spike protein S. In terms of processing, stearoylated by ZDHHC6 which inhibits TFRC-mediated activation of the JNK pathway and promotes mitochondrial fragmentation. Stearoylation does not affect iron uptake. Post-translationally, N- and O-glycosylated, phosphorylated and palmitoylated. The serum form is only glycosylated. Proteolytically cleaved on Arg-100 to produce the soluble serum form (sTfR). In terms of processing, palmitoylated on both Cys-62 and Cys-67. Cys-62 seems to be the major site of palmitoylation.

The protein localises to the cell membrane. The protein resides in the melanosome. It is found in the secreted. Cellular uptake of iron occurs via receptor-mediated endocytosis of ligand-occupied transferrin receptor into specialized endosomes. Endosomal acidification leads to iron release. The apotransferrin-receptor complex is then recycled to the cell surface with a return to neutral pH and the concomitant loss of affinity of apotransferrin for its receptor. Transferrin receptor is necessary for development of erythrocytes and the nervous system. A second ligand, the hereditary hemochromatosis protein HFE, competes for binding with transferrin for an overlapping C-terminal binding site. Positively regulates T and B cell proliferation through iron uptake. Acts as a lipid sensor that regulates mitochondrial fusion by regulating activation of the JNK pathway. When dietary levels of stearate (C18:0) are low, promotes activation of the JNK pathway, resulting in HUWE1-mediated ubiquitination and subsequent degradation of the mitofusin MFN2 and inhibition of mitochondrial fusion. When dietary levels of stearate (C18:0) are high, TFRC stearoylation inhibits activation of the JNK pathway and thus degradation of the mitofusin MFN2. Mediates uptake of NICOL1 into fibroblasts where it may regulate extracellular matrix production. Its function is as follows. (Microbial infection) Acts as a receptor for new-world arenaviruses: Guanarito, Junin and Machupo virus. Functionally, (Microbial infection) Acts as a host entry factor for rabies virus that hijacks the endocytosis of TFRC to enter cells. In terms of biological role, (Microbial infection) Acts as a host entry factor for SARS-CoV, MERS-CoV and SARS-CoV-2 viruses that hijack the endocytosis of TFRC to enter cells. In Homo sapiens (Human), this protein is Transferrin receptor protein 1 (TFRC).